The following is a 308-amino-acid chain: UDP-N-acetylenolpyruvoylglucosamine reductase (308 aa).

An FAD-binding PCMH-type domain is found at 32–197; sequence QTGGKADYYL…LEAAFTLAPG (166 aa). Arginine 176 is a catalytic residue. Residue serine 226 is the Proton donor of the active site. The active site involves glutamate 296.

The protein belongs to the MurB family. It depends on FAD as a cofactor.

The protein localises to the cytoplasm. The catalysed reaction is UDP-N-acetyl-alpha-D-muramate + NADP(+) = UDP-N-acetyl-3-O-(1-carboxyvinyl)-alpha-D-glucosamine + NADPH + H(+). It participates in cell wall biogenesis; peptidoglycan biosynthesis. Cell wall formation. This chain is UDP-N-acetylenolpyruvoylglucosamine reductase, found in Staphylococcus saprophyticus subsp. saprophyticus (strain ATCC 15305 / DSM 20229 / NCIMB 8711 / NCTC 7292 / S-41).